Reading from the N-terminus, the 156-residue chain is MYQAINPCPQSWYGSPQLEREIVCKMSGAPHYPNYYPVHPNALGGAWFDTSLNARSLTTTPSLTTCTPPSLAACTPPTSLGMVDSPPHINPPRRIGTLCFDFGSAKSPQRCECVASDRPSTTSNTAPDTYRLLITNSKTRKNNYGTCRLEPLTYGI.

This is an uncharacterized protein from Aedes vexans (Inland floodwater mosquito).